Reading from the N-terminus, the 443-residue chain is Structure-specific endonuclease subunit SLX1 (443 aa).

One can recognise a GIY-YIG domain in the interval 13–93 (RVYVCYCLRS…QKPHASRHLR (81 aa)). The tract at residues 121–140 (FPATRSSAPSSAASHDSGLN) is disordered. Residues 361-419 (CGLCGGHINRHVPLSYTHCPHACDAVFHLTCLARYSLEQETRAHARTFCLPTSAWCPMC) form an SLX1-type zinc finger.

It belongs to the SLX1 family. Forms a heterodimer with SLX4. Requires a divalent metal cation as cofactor.

It localises to the nucleus. In terms of biological role, catalytic subunit of the SLX1-SLX4 structure-specific endonuclease that resolves DNA secondary structures generated during DNA repair and recombination. Has endonuclease activity towards branched DNA substrates, introducing single-strand cuts in duplex DNA close to junctions with ss-DNA. The polypeptide is Structure-specific endonuclease subunit SLX1 (Malassezia globosa (strain ATCC MYA-4612 / CBS 7966) (Dandruff-associated fungus)).